Consider the following 401-residue polypeptide: Voltage-gated potassium channel subunit beta-1 (401 aa).

NADP(+)-binding residues include Thr90, Trp91, Gln97, and Asp119. The Proton donor/acceptor role is filled by Tyr124. NADP(+) contacts are provided by Asn192, Ser222, Arg223, Gln248, Trp277, Ser278, Pro279, Leu280, Ala281, Cys282, Lys288, Arg298, Gly357, Ser359, Gln363, Glu366, and Asn367.

The protein belongs to the shaker potassium channel beta subunit family. As to quaternary structure, homotetramer. Interaction with tetrameric potassium channel alpha subunits gives rise to a heterooctamer.

It is found in the cytoplasm. The protein resides in the membrane. It localises to the cell membrane. The enzyme catalyses a primary alcohol + NADP(+) = an aldehyde + NADPH + H(+). The catalysed reaction is a secondary alcohol + NADP(+) = a ketone + NADPH + H(+). Functionally, regulatory subunit of the voltage-gated potassium (Kv) channels composed of pore-forming and potassium-conducting alpha subunits and of regulatory beta subunits. The beta-1/KCNAB1 cytoplasmic subunit mediates closure of delayed rectifier potassium channels by physically obstructing the pore via its N-terminal domain and increases the speed of channel closure for other family members. Promotes the inactivation of KCNA1, KCNA2, KCNA4, KCNA5 and KCNA6 alpha subunit-containing channels. Displays nicotinamide adenine dinucleotide phosphate (NADPH)-dependent aldoketoreductase activity by catalyzing the NADPH-dependent reduction of a variety of endogenous aldehydes and ketones. The binding of NADPH is required for efficient down-regulation of potassium channel activity. Oxidation of the bound NADPH restrains N-terminal domain from blocking the channel, thereby decreasing N-type inactivation of potassium channel activity. In Gallus gallus (Chicken), this protein is Voltage-gated potassium channel subunit beta-1 (KCNAB1).